Consider the following 206-residue polypeptide: Small ribosomal subunit protein uS4 (206 aa).

The region spanning 96-156 (GRLDNVVYRM…EKAKKQSRVK (61 aa)) is the S4 RNA-binding domain.

The protein belongs to the universal ribosomal protein uS4 family. As to quaternary structure, part of the 30S ribosomal subunit. Contacts protein S5. The interaction surface between S4 and S5 is involved in control of translational fidelity.

In terms of biological role, one of the primary rRNA binding proteins, it binds directly to 16S rRNA where it nucleates assembly of the body of the 30S subunit. Its function is as follows. With S5 and S12 plays an important role in translational accuracy. This chain is Small ribosomal subunit protein uS4, found in Shigella flexneri.